The chain runs to 206 residues: MKVVAFERSVQGTGASRRLRNAGKTPAIIYGAGAEPKLIELDHNALYHALKKEAFHSSILDIEVAGKVEKALLRDFQLHPFKQLVLHVDFQRVSATEKIHVKVPLHFLNQETAPGVKLGHGIVNHILNDVEVSCLPADLPEFIEVDLGNLEIGQTLHISDLKLPKGVTIVTHGGDENPAVANISVPAGEVSAAAAESAGEGDKPAA.

Belongs to the bacterial ribosomal protein bL25 family. CTC subfamily. Part of the 50S ribosomal subunit; part of the 5S rRNA/L5/L18/L25 subcomplex. Contacts the 5S rRNA. Binds to the 5S rRNA independently of L5 and L18.

This is one of the proteins that binds to the 5S RNA in the ribosome where it forms part of the central protuberance. In Ralstonia nicotianae (strain ATCC BAA-1114 / GMI1000) (Ralstonia solanacearum), this protein is Large ribosomal subunit protein bL25.